A 138-amino-acid chain; its full sequence is Protein NrdI (138 aa).

The protein belongs to the NrdI family.

Its function is as follows. Probably involved in ribonucleotide reductase function. The sequence is that of Protein NrdI from Beutenbergia cavernae (strain ATCC BAA-8 / DSM 12333 / CCUG 43141 / JCM 11478 / NBRC 16432 / NCIMB 13614 / HKI 0122).